The sequence spans 198 residues: Dephospho-CoA kinase (198 aa).

The DPCK domain occupies leucine 2 to leucine 90. Glycine 10–serine 15 contributes to the ATP binding site.

This sequence belongs to the CoaE family.

Its subcellular location is the cytoplasm. The catalysed reaction is 3'-dephospho-CoA + ATP = ADP + CoA + H(+). It participates in cofactor biosynthesis; coenzyme A biosynthesis; CoA from (R)-pantothenate: step 5/5. In terms of biological role, catalyzes the phosphorylation of the 3'-hydroxyl group of dephosphocoenzyme A to form coenzyme A. The polypeptide is Dephospho-CoA kinase (Mycoplasma genitalium (strain ATCC 33530 / DSM 19775 / NCTC 10195 / G37) (Mycoplasmoides genitalium)).